Reading from the N-terminus, the 116-residue chain is Large ribosomal subunit protein bL19 (116 aa).

Belongs to the bacterial ribosomal protein bL19 family.

Functionally, this protein is located at the 30S-50S ribosomal subunit interface and may play a role in the structure and function of the aminoacyl-tRNA binding site. The polypeptide is Large ribosomal subunit protein bL19 (Actinobacillus succinogenes (strain ATCC 55618 / DSM 22257 / CCUG 43843 / 130Z)).